The sequence spans 839 residues: MISPPPTFSFANLLNGSYGVDTPEEVERVRREQREDAEAALRNYKPLPAVDVSESVPRDEPIVSQTVTAAPVTSVDDAFVSFGAEDYLEMSPSELLSAFELMVKPLRVGEVLCSSFDRSLFISSVAMARTLLLAPLTSTRTLKRFEDLVAAIYLKTDFFLEDDGPQTDVSQSDVPGYIFEPGQHSSGFEPPPICAKCDLILYQCPCFDFNALRESCAEKTFSHDYVIEGLDGVIDNATLLSNLGPFLLPVHCSYSKTEDPDFVVDPSLARPTDRVDVHVVQAVCDTTLPTHGNYDDSFHQVFVDSADYSTDMDHVRLRQSDLVAKIPDGGHMLPVLNTGSGHQRVGTTKEVLTAIKKRNADVPELGDSVNLSRLSKAVAERFRLSYMNVDALAKSNFVNVVSNFHAYMQKWPSSGLSYDDLPDLHAENLQFYDHMIKSDVKPVVTDTLNVDRPVPATITFHKKTITSQFSPLFISLFERFQRCLRERVVLPVGKISSLEMTGFSVLNKHCLEIDLSKFDKSQGEFHLMIQEHILNDLGCPAPITKWWCDFHRFSYIKDKRAGVGMPISFQRRTGDAFTYFGNTIVTMAEFAWCYDTDQFDRLLFSGDDSLAFSKLPPVGDPSKFTTLFNMEAKVMEPAVPYICSKFYSLMSLVTRFQSPTIREIQRLGTKKIPYSDNNDFLFAHFMSFVDRLKFMDRMSQSCIDQLSIFFELKYKKSGNEAALVLGAFKKYTANFNAYKELYYSDRQQCDLVNTFCISEFRVIRRTTVKKKKNGCVDSSGVDRRPPLSQFAGGETSKTKVSRQKPASEGLQKSQRESAIYSETFPDVTIPRSRSRGLVS.

In terms of domain architecture, RdRp catalytic spans 508-621 (KHCLEIDLSK…FSKLPPVGDP (114 aa)). Residues 773 to 824 (NGCVDSSGVDRRPPLSQFAGGETSKTKVSRQKPASEGLQKSQRESAIYSETF) form a disordered region.

The protein belongs to the ssRNA positive-strand viruses RNA-directed RNA polymerase family. As to quaternary structure, interacts with replication protein 1a.

The catalysed reaction is RNA(n) + a ribonucleoside 5'-triphosphate = RNA(n+1) + diphosphate. Functionally, RNA-dependent RNA polymerase which replicates the viral genome composed of 3 RNA segments, RNA1, RNA2 and RNA3. The sequence is that of RNA-directed RNA polymerase 2a from Cucumber mosaic virus (strain Q) (CMV).